A 23-amino-acid polypeptide reads, in one-letter code: Phallacidin proprotein (23 aa).

Pro1 is a propeptide. A cross-link (cyclopeptide (Ala-Pro)) is located at residues 2-8 (AWLVDCP). A cross-link (2'-cysteinyl-6'-hydroxytryptophan sulfoxide (Trp-Cys)) is located at residues 3 to 7 (WLVDC). The propeptide occupies 9-23 (CVGDDISRLLTRGEK).

This sequence belongs to the MSDIN fungal toxin family. In terms of processing, processed by the macrocyclase-peptidase enzyme POPB to yield a toxic cyclic heptapeptide. POPB first removes 10 residues from the N-terminus. Conformational trapping of the remaining peptide forces the enzyme to release this intermediate rather than proceed to macrocyclization. The enzyme rebinds the remaining peptide in a different conformation and catalyzes macrocyclization of the N-terminal 7 residues.

Its function is as follows. Major toxin that belongs to the bicyclic heptapeptides called phallotoxins. Although structurally related to amatoxins, phallotoxins have a different mode of action, which is the stabilization of F-actin. Phallotoxins are poisonous when administered parenterally, but not orally because of poor absorption. The polypeptide is Phallacidin proprotein (Amanita rimosa).